Reading from the N-terminus, the 129-residue chain is Tumor necrosis factor receptor superfamily member 12A (129 aa).

An N-terminal signal peptide occupies residues 1 to 27 (MARGSLRRLLRLLVLGLWLALLRSVAG). Over 28–80 (EQAPGTAPCSRGSSWSADLDKCMDCASCRARPHSDFCLGCAAAPPAPFRLLWP) the chain is Extracellular. 3 disulfides stabilise this stretch: cysteine 36-cysteine 49, cysteine 52-cysteine 67, and cysteine 55-cysteine 64. The stretch at 36-67 (CSRGSSWSADLDKCMDCASCRARPHSDFCLGC) is one TNFR-Cys; atypical repeat. A helical membrane pass occupies residues 81–101 (ILGGALSLTFVLGLLSGFLVW). Topologically, residues 102–129 (RRCRRREKFTTPIEETGGEGCPAVALIQ) are cytoplasmic.

As to quaternary structure, associates with TRAF1 and TRAF2, and probably also with TRAF3. As to expression, highly expressed in heart, placenta and kidney. Intermediate expression in lung, skeletal muscle and pancreas.

Its subcellular location is the membrane. Functionally, receptor for TNFSF12/TWEAK. Weak inducer of apoptosis in some cell types. Promotes angiogenesis and the proliferation of endothelial cells. May modulate cellular adhesion to matrix proteins. The polypeptide is Tumor necrosis factor receptor superfamily member 12A (TNFRSF12A) (Homo sapiens (Human)).